Reading from the N-terminus, the 198-residue chain is MIEFVYPHTQLVAGVDEVGRGPLVGAVVTAAVILDPARPIAGLNDSKKLSEKRRLVLCEEIKEKALSWSLGRAEPHEIDELNILHATMLAMQRAVAGLHIAPEYVLIDGNRCPKLPMPSMAVVKGDSRVPEISAASILAKVTRDAEMAALDIVFPQYGFAQHKGYPTAFHLEKLAEHGATEHHRRSFGPVKRALGLAS.

In terms of domain architecture, RNase H type-2 spans 10 to 198; that stretch reads QLVAGVDEVG…PVKRALGLAS (189 aa). A divalent metal cation is bound by residues aspartate 16, glutamate 17, and aspartate 108.

The protein belongs to the RNase HII family. It depends on Mn(2+) as a cofactor. The cofactor is Mg(2+).

It is found in the cytoplasm. The enzyme catalyses Endonucleolytic cleavage to 5'-phosphomonoester.. In terms of biological role, endonuclease that specifically degrades the RNA of RNA-DNA hybrids. This Escherichia coli O45:K1 (strain S88 / ExPEC) protein is Ribonuclease HII.